The chain runs to 541 residues: Zingiberene synthase (541 aa).

Mg(2+)-binding residues include Asp295, Asp299, Asn439, Ser443, and Glu447. The DDXXD motif signature appears at 295–299; it reads DDIID.

This sequence belongs to the terpene synthase family. Mg(2+) serves as cofactor. It depends on Mn(2+) as a cofactor.

Its subcellular location is the cytoplasm. The enzyme catalyses (2E,6E)-farnesyl diphosphate = alpha-zingiberene + diphosphate. It participates in secondary metabolite biosynthesis; terpenoid biosynthesis. Its function is as follows. Sesquiterpene synthase converting farnesyl diphosphate into two major products, zingiberene &gt; beta-sesquiphellandrene, and five minor products, 7-epi-sesquithujene, sesquisabinene A, (E)-alpha-bergamotene, (E)-beta-farnesene and beta-bisabolene. Can also accept geranyl diphosphate as substrate, producing nine monoterpenes, with myrcene, limonene and alpha-terpinolene as the major products. The chain is Zingiberene synthase (TPS1) from Sorghum bicolor (Sorghum).